Consider the following 1264-residue polypeptide: Imitation switch two complex protein 1 (1264 aa).

The 108-residue stretch at 23-130 (VQVWHIEETG…GEVVYLRKQK (108 aa)) folds into the WAC domain. Disordered regions lie at residues 130–153 (KDSSTTSSNSQQSTPQPDDMVEIN), 275–374 (PVVA…PANA), 482–508 (QEIENNGLPMKNKAETTTEEDSENPSD), 627–655 (ATEVQKESDAKNETNSESDSKSDSDSEER), and 803–825 (LNKTDENTPSADGADKKDDSESN). Residues 132–147 (SSTTSSNSQQSTPQPD) show a composition bias toward low complexity. Composition is skewed to polar residues over residues 280 to 289 (RSNSANVSSP) and 299 to 310 (KSSGKSNTSNDA). One can recognise a DDT domain in the interval 423–483 (FDSFGKLLQA…IRTQTSKEQE (61 aa)).

In terms of assembly, component of the ISW2 complex, which at least consists of ISW2, ITC1, DLS1 and DPB4. May form a stable subcomplex with ISW2.

Its subcellular location is the nucleus. In terms of biological role, functions as a component of the ISW2 complex, which acts in remodeling the chromatin by catalyzing an ATP-dependent alteration in the structure of nucleosomal DNA. The ISW2 complex is involved in coordinating transcriptional repression and in inheritance of telomeric silencing. It is involved in repression of MAT a-specific genes, INO1, and early meiotic genes during mitotic growth dependent upon transcription factor UME6 and in a parallel pathway to the RPD3-SIN3 histone deacetylase complex. ITC1 is required for nucleosome-stimulated ATPase activity and chromatin-remodeling activity of the complex. Required for the repression of MATa a-specific genes. The sequence is that of Imitation switch two complex protein 1 (ITC1) from Saccharomyces cerevisiae (strain ATCC 204508 / S288c) (Baker's yeast).